The chain runs to 660 residues: Peroxisomal acyl-coenzyme A oxidase 1 (660 aa).

A Phosphoserine modification is found at S26. An N6-succinyllysine mark is found at K89 and K90. Positions 139 and 178 each coordinate FAD. The residue at position 216 (K216) is an N6-acetyllysine. Position 241 is an N6-succinyllysine (K241). K255, K267, and K272 each carry N6-acetyllysine. K349 carries the post-translational modification N6-succinyllysine. Catalysis depends on E421, which acts as the Proton acceptor. 2 positions are modified to N6-acetyllysine; alternate: K437 and K446. N6-succinyllysine; alternate occurs at positions 437 and 446. N6-acetyllysine is present on K500. An N6-acetyllysine; alternate modification is found at K512. At K512 the chain carries N6-succinyllysine; alternate. K542 carries the post-translational modification N6-succinyllysine. Position 637 is an N6-acetyllysine; alternate (K637). K637 bears the N6-succinyllysine; alternate mark. Position 643 is an N6-succinyllysine (K643). S649 is modified (phosphoserine). K651 carries the N6-acetyllysine modification. K654 carries the N6-succinyllysine modification. A Microbody targeting signal motif is present at residues 658-660; that stretch reads SKL.

Belongs to the acyl-CoA oxidase family. In terms of assembly, homodimer. Interacts with LONP2. FAD serves as cofactor.

It localises to the peroxisome. The enzyme catalyses a 2,3-saturated acyl-CoA + O2 = a (2E)-enoyl-CoA + H2O2. It carries out the reaction hexadecanoyl-CoA + O2 = (2E)-hexadecenoyl-CoA + H2O2. The catalysed reaction is dodecanoyl-CoA + O2 = (2E)-dodecenoyl-CoA + H2O2. It catalyses the reaction octanoyl-CoA + O2 = (2E)-octenoyl-CoA + H2O2. The enzyme catalyses decanoyl-CoA + O2 = (2E)-decenoyl-CoA + H2O2. It carries out the reaction tetradecanoyl-CoA + O2 = (2E)-tetradecenoyl-CoA + H2O2. The catalysed reaction is hexadecanedioyl-CoA + O2 = (2E)-hexadecenedioyl-CoA + H2O2. It catalyses the reaction tetracosanoyl-CoA + O2 = (2E)-tetracosenoyl-CoA + H2O2. The enzyme catalyses glutaryl-CoA + O2 = (2E)-glutaconyl-CoA + H2O2. It carries out the reaction hexanoyl-CoA + O2 = (2E)-hexenoyl-CoA + H2O2. The catalysed reaction is octadecanoyl-CoA + O2 = (2E)-octadecenoyl-CoA + H2O2. It catalyses the reaction (5Z,8Z,11Z,14Z,17Z)-eicosapentaenoyl-CoA + O2 = (2E,5Z,8Z,11Z,14Z,17Z)-icosahexaenoyl-CoA + H2O2. The enzyme catalyses (6Z,9Z,12Z,15Z,18Z,21Z)-tetracosahexaenoyl-CoA + O2 = (2E,6Z,9Z,12Z,15Z,18Z,21Z)-tetracosaheptaenoyl-CoA + H2O2. It functions in the pathway lipid metabolism; peroxisomal fatty acid beta-oxidation. Functionally, involved in the initial and rate-limiting step of peroxisomal beta-oxidation of straight-chain saturated and unsaturated very-long-chain fatty acids. Catalyzes the desaturation of fatty acyl-CoAs such as palmitoyl-CoA (hexadecanoyl-CoA) to 2-trans-enoyl-CoAs ((2E)-enoyl-CoAs) such as (2E)-hexadecenoyl-CoA, and donates electrons directly to molecular oxygen (O(2)), thereby producing hydrogen peroxide (H(2)O(2)). In terms of biological role, shows highest activity against medium-chain fatty acyl-CoAs. Shows optimum activity with a chain length of 10 carbons (decanoyl-CoA) in vitro. Is active against a much broader range of substrates and shows activity towards long-chain acyl-CoAs. The polypeptide is Peroxisomal acyl-coenzyme A oxidase 1 (Pongo abelii (Sumatran orangutan)).